Reading from the N-terminus, the 252-residue chain is 2-succinyl-6-hydroxy-2,4-cyclohexadiene-1-carboxylate synthase (252 aa).

This sequence belongs to the AB hydrolase superfamily. MenH family. In terms of assembly, monomer.

The enzyme catalyses 5-enolpyruvoyl-6-hydroxy-2-succinyl-cyclohex-3-ene-1-carboxylate = (1R,6R)-6-hydroxy-2-succinyl-cyclohexa-2,4-diene-1-carboxylate + pyruvate. Its pathway is quinol/quinone metabolism; 1,4-dihydroxy-2-naphthoate biosynthesis; 1,4-dihydroxy-2-naphthoate from chorismate: step 3/7. It functions in the pathway quinol/quinone metabolism; menaquinone biosynthesis. Catalyzes a proton abstraction reaction that results in 2,5-elimination of pyruvate from 2-succinyl-5-enolpyruvyl-6-hydroxy-3-cyclohexene-1-carboxylate (SEPHCHC) and the formation of 2-succinyl-6-hydroxy-2,4-cyclohexadiene-1-carboxylate (SHCHC). The protein is 2-succinyl-6-hydroxy-2,4-cyclohexadiene-1-carboxylate synthase of Shigella dysenteriae serotype 1 (strain Sd197).